Here is a 286-residue protein sequence, read N- to C-terminus: Pantothenate synthetase (286 aa).

30-37 (MGNLHSGH) is an ATP binding site. Catalysis depends on His37, which acts as the Proton donor. Gln61 serves as a coordination point for (R)-pantoate. A beta-alanine-binding site is contributed by Gln61. ATP is bound at residue 149–152 (GQKD). Position 155 (Gln155) interacts with (R)-pantoate. Residues Val178 and 186–189 (LSSR) contribute to the ATP site.

This sequence belongs to the pantothenate synthetase family. Homodimer.

Its subcellular location is the cytoplasm. It catalyses the reaction (R)-pantoate + beta-alanine + ATP = (R)-pantothenate + AMP + diphosphate + H(+). Its pathway is cofactor biosynthesis; (R)-pantothenate biosynthesis; (R)-pantothenate from (R)-pantoate and beta-alanine: step 1/1. Functionally, catalyzes the condensation of pantoate with beta-alanine in an ATP-dependent reaction via a pantoyl-adenylate intermediate. The sequence is that of Pantothenate synthetase from Pseudomonas fluorescens (strain Pf0-1).